Here is an 84-residue protein sequence, read N- to C-terminus: Alpha-mammal toxin Ts2 (84 aa).

Positions 1–20 are cleaved as a signal peptide; the sequence is MKGFLLFISILMMIGTIVVG. The 63-residue stretch at 21-83 folds into the LCN-type CS-alpha/beta domain; sequence KEGYAMDHEG…VWDYATNKCG (63 aa). Cystine bridges form between Cys31–Cys82, Cys35–Cys58, Cys43–Cys63, and Cys47–Cys65. Position 82 is a cysteine amide (Cys82).

Belongs to the long (4 C-C) scorpion toxin superfamily. Sodium channel inhibitor family. Beta subfamily. Expressed by the venom gland.

It is found in the secreted. In terms of biological role, alpha toxins bind voltage-independently at site-3 of sodium channels (Nav) and inhibit the inactivation of the activated channels, thereby blocking neuronal transmission. This toxin acts on Nav1.2/SCN2A, Nav1.3/SCN3A, Nav1.5/SCN5A, Nav1.6/SCN8A and Nav1.7/SCN9A voltage-gated sodium channels, with the highest affinity for Nav1.3/SCN3A, followed by Nav1.6/SCN8A and Nav1.7/SCN9A which are affected almost equally. Interestingly, shows a significant shift of the voltage dependence of activation for Nav1.3/SCN3A that is characteristic of beta-toxins. In addition, in presence of LPS, this toxin inhibits the release of NO, IL-6 and TNF-alpha in J774.1 cells. Further, in the absence of LPS, it stimulates the production of the anti-inflammatory cytokine IL-10. This toxin is active on mammals. The chain is Alpha-mammal toxin Ts2 from Tityus serrulatus (Brazilian scorpion).